Here is a 124-residue protein sequence, read N- to C-terminus: Riboflavin kinase (124 aa).

10–15 (GLGKAA) is a CDP binding site. Mg(2+)-binding residues include Thr-39 and Asn-41. Residues Thr-93 and Glu-101 each contribute to the FMN site. Residue 106–109 (DKLR) participates in CDP binding.

Belongs to the archaeal riboflavin kinase family. Mg(2+) serves as cofactor.

It catalyses the reaction riboflavin + CTP = CDP + FMN + H(+). The protein operates within cofactor biosynthesis; FMN biosynthesis; FMN from riboflavin (CTP route): step 1/1. Its function is as follows. Catalyzes the CTP-dependent phosphorylation of riboflavin (vitamin B2) to form flavin mononucleotide (FMN). The polypeptide is Riboflavin kinase (Methanobrevibacter smithii (strain ATCC 35061 / DSM 861 / OCM 144 / PS)).